The primary structure comprises 145 residues: D-aminoacyl-tRNA deacylase (145 aa).

The short motif at 137–138 is the Gly-cisPro motif, important for rejection of L-amino acids element; that stretch reads GP.

This sequence belongs to the DTD family. In terms of assembly, homodimer.

Its subcellular location is the cytoplasm. It carries out the reaction glycyl-tRNA(Ala) + H2O = tRNA(Ala) + glycine + H(+). It catalyses the reaction a D-aminoacyl-tRNA + H2O = a tRNA + a D-alpha-amino acid + H(+). An aminoacyl-tRNA editing enzyme that deacylates mischarged D-aminoacyl-tRNAs. Also deacylates mischarged glycyl-tRNA(Ala), protecting cells against glycine mischarging by AlaRS. Acts via tRNA-based rather than protein-based catalysis; rejects L-amino acids rather than detecting D-amino acids in the active site. By recycling D-aminoacyl-tRNA to D-amino acids and free tRNA molecules, this enzyme counteracts the toxicity associated with the formation of D-aminoacyl-tRNA entities in vivo and helps enforce protein L-homochirality. This is D-aminoacyl-tRNA deacylase from Pseudomonas putida (strain ATCC 47054 / DSM 6125 / CFBP 8728 / NCIMB 11950 / KT2440).